The chain runs to 342 residues: uncharacterized protein (342 aa).

This sequence belongs to the cycloisomerase 2 family.

This is an uncharacterized protein from Staphylococcus aureus (strain MSSA476).